We begin with the raw amino-acid sequence, 878 residues long: Ecdysone receptor (878 aa).

Disordered regions lie at residues 1 to 27 (MKRRWSNNGGFMRLPEESSSEVTSSSN) and 209 to 254 (GLGM…SKKG). The modulating stretch occupies residues 1-263 (MKRRWSNNGG…GPAPRVQEEL (263 aa)). NR C4-type zinc fingers lie at residues 264–284 (CLVCGDRASGYHYNALTCEGC) and 300–324 (CKFGRACEMDMYMRRKCQECRLKKC). Positions 264-336 (CLVCGDRASG…VGMRPECVVP (73 aa)) form a DNA-binding region, nuclear receptor. The tract at residues 344–374 (RREKKAQKEKDKMTTSPSSQHGGNGSLASGG) is disordered. Residues 365 to 374 (GGNGSLASGG) show a composition bias toward gly residues. The NR LBD domain occupies 419-654 (NQLAVIYKLI…FLEEIWDVHA (236 aa)). 2 stretches are compositionally biased toward low complexity: residues 698–709 (TSAAAAAAQHQP) and 728–759 (QTQPQLQPQLPPQLQGQLQPQLQPQLQTQLQP). Positions 698–759 (TSAAAAAAQH…QPQLQTQLQP (62 aa)) are disordered.

It belongs to the nuclear hormone receptor family. NR1 subfamily. Heterodimer of USP and ECR. Only the heterodimer is capable of high-affinity binding to ecdysone. Interacts with trr in an ecdysone-dependent manner. Upon ecdysone stimulation, interacts with Nup98. As to expression, isoform B1 predominates over isoform A in larval tissues, imaginal histoblast nests and midgut islands. Isoform A predominates over B1 in imaginal disks, and the larval prothoracic gland.

The protein localises to the nucleus. Its function is as follows. Receptor for ecdysone. Binds to ecdysone response elements (ECRES) following ecdysone-binding, and recruitment of a complex containing the histone methyltransferase trr, leads to activate transcription of target genes. In Drosophila melanogaster (Fruit fly), this protein is Ecdysone receptor (EcR).